The primary structure comprises 93 residues: DNA-binding protein Fis (93 aa).

Positions 74-93 (QTRAAQMMGINRGTLRKKLK) form a DNA-binding region, H-T-H motif.

It belongs to the transcriptional regulatory Fis family. Homodimer.

Its function is as follows. Activates ribosomal RNA transcription. Plays a direct role in upstream activation of rRNA promoters. The polypeptide is DNA-binding protein Fis (Proteus vulgaris).